Reading from the N-terminus, the 217-residue chain is Pyridoxine/pyridoxamine 5'-phosphate oxidase (217 aa).

Substrate contacts are provided by residues 14–17 (RKSY) and Lys72. Residues 67–72 (RVVLIK), 82–83 (YT), Arg88, and Lys89 contribute to the FMN site. Positions 129, 133, and 137 each coordinate substrate. FMN contacts are provided by residues 146–147 (QS) and Trp190. 196–198 (RLH) lines the substrate pocket. Arg200 is an FMN binding site.

Belongs to the pyridoxamine 5'-phosphate oxidase family. As to quaternary structure, homodimer. FMN is required as a cofactor.

It carries out the reaction pyridoxamine 5'-phosphate + O2 + H2O = pyridoxal 5'-phosphate + H2O2 + NH4(+). The enzyme catalyses pyridoxine 5'-phosphate + O2 = pyridoxal 5'-phosphate + H2O2. It functions in the pathway cofactor metabolism; pyridoxal 5'-phosphate salvage; pyridoxal 5'-phosphate from pyridoxamine 5'-phosphate: step 1/1. It participates in cofactor metabolism; pyridoxal 5'-phosphate salvage; pyridoxal 5'-phosphate from pyridoxine 5'-phosphate: step 1/1. Catalyzes the oxidation of either pyridoxine 5'-phosphate (PNP) or pyridoxamine 5'-phosphate (PMP) into pyridoxal 5'-phosphate (PLP). The protein is Pyridoxine/pyridoxamine 5'-phosphate oxidase of Acidovorax sp. (strain JS42).